A 298-amino-acid polypeptide reads, in one-letter code: tRNA pseudouridine synthase B (298 aa).

Asp39 functions as the Nucleophile in the catalytic mechanism.

This sequence belongs to the pseudouridine synthase TruB family. Type 1 subfamily.

The catalysed reaction is uridine(55) in tRNA = pseudouridine(55) in tRNA. Functionally, responsible for synthesis of pseudouridine from uracil-55 in the psi GC loop of transfer RNAs. The chain is tRNA pseudouridine synthase B from Oenococcus oeni (strain ATCC BAA-331 / PSU-1).